Consider the following 873-residue polypeptide: Zinc fingers and homeoboxes protein 1 (873 aa).

The interval 24 to 63 (LISDLDEGPPVLTPVENTRAESISSDEEVHESVDSDNQQN) is disordered. At T36 the chain carries Phosphothreonine. A phosphoserine mark is found at S45, S47, and S48. C2H2-type zinc fingers lie at residues 70 to 93 (YECKYCTFQTPDLNMFTFHVDSEH) and 102 to 125 (YVCVECNFLTKRYDALSEHNLKYH). K159 participates in a covalent cross-link: Glycyl lysine isopeptide (Lys-Gly) (interchain with G-Cter in SUMO2). The tract at residues 200–236 (HNSVEDVPEEKENEIKPDREEIVENPSSSASESNTST) is disordered. The residue at position 202 (S202) is a Phosphoserine. Positions 212–221 (NEIKPDREEI) are enriched in basic and acidic residues. Over residues 223 to 236 (ENPSSSASESNTST) the composition is skewed to low complexity. The interval 272–432 (NSNLIPKVLI…QNNIQKSQVP (161 aa)) is required for dimerization. Residues 272–564 (NSNLIPKVLI…AQPKQSWNPF (293 aa)) form a required for interaction with NFYA region. Positions 284-346 (NSIPTYNAAL…LKHGVSWTPE (63 aa)) form a DNA-binding region, homeobox 1. Residues K441, K454, K485, and K629 each participate in a glycyl lysine isopeptide (Lys-Gly) (interchain with G-Cter in SUMO2) cross-link. 2 consecutive DNA-binding regions (homeobox) follow at residues 464–526 (SFGI…KSNQ) and 569–630 (PQKF…EEKM). Disordered regions lie at residues 626 to 667 (KEEK…ICKK) and 732 to 769 (SSMNGLSSLRKRGRGRPKGRGRGRPRGRPRGSKRINNW). The residue at position 648 (S648) is a Phosphoserine. Positions 660–722 (STGKICKKTP…YAWKNGNLKW (63 aa)) form a DNA-binding region, homeobox 4. The interval 734–768 (MNGLSSLRKRGRGRPKGRGRGRPRGRPRGSKRINN) is required for nuclear localization. The span at 740–764 (LRKRGRGRPKGRGRGRPRGRPRGSK) shows a compositional bias: basic residues. S774 carries the post-translational modification Phosphoserine. Residues 777-832 (KFKTGTAILKDYYLKHKFLNEQDLDELVNKSHMGYEQVREWFAERQRRSELGIELF) constitute a DNA-binding region (homeobox 5). Residues 829 to 873 (IELFEENEEEDEVIDDQEEDEEETDDSDTWEPPRHVKRKLSKSDD) are disordered. Over residues 831–857 (LFEENEEEDEVIDDQEEDEEETDDSDT) the composition is skewed to acidic residues. The segment at 831-873 (LFEENEEEDEVIDDQEEDEEETDDSDTWEPPRHVKRKLSKSDD) is required for repressor activity. Residues 863-873 (HVKRKLSKSDD) are compositionally biased toward basic residues.

Belongs to the ZHX family. In terms of assembly, forms homodimers. Heterodimer (via HD1 domain) with ZHX2 (via HD1 domain). Also forms a heterodimer with ZHX3 which is a prerequisite for repressor activity. Interacts with ATF7IP and NFYA. Interacts (via homeobox domains) with DNMT3B (via PWWP domain).

It localises to the nucleus. Functionally, acts as a transcriptional repressor. Increases DNMT3B-mediated repressive transcriptional activity when DNMT3B is tethered to DNA. May link molecule between DNMT3B and other co-repressor proteins. In Pan troglodytes (Chimpanzee), this protein is Zinc fingers and homeoboxes protein 1 (ZHX1).